A 453-amino-acid chain; its full sequence is Methionine aminopeptidase 2-1 (453 aa).

The segment covering 1-12 (MGSKTPDGHRQS) has biased composition (basic and acidic residues). A disordered region spans residues 1-101 (MGSKTPDGHR…TTPPRVPLST (101 aa)). Residues 46–57 (GEDDDDDDENEE) are compositionally biased toward acidic residues. Basic residues predominate over residues 67-82 (KKKKRKKSKKKNKKSK). H210 contributes to the substrate binding site. A divalent metal cation contacts are provided by D231, D242, and H306. Substrate is bound at residue H314. Residues E339 and E434 each coordinate a divalent metal cation.

This sequence belongs to the peptidase M24A family. Methionine aminopeptidase eukaryotic type 2 subfamily. Co(2+) is required as a cofactor. Zn(2+) serves as cofactor. It depends on Mn(2+) as a cofactor. Requires Fe(2+) as cofactor.

Its subcellular location is the cytoplasm. The enzyme catalyses Release of N-terminal amino acids, preferentially methionine, from peptides and arylamides.. Its function is as follows. Cotranslationally removes the N-terminal methionine from nascent proteins. The N-terminal methionine is often cleaved when the second residue in the primary sequence is small and uncharged (Met-Ala-, Cys, Gly, Pro, Ser, Thr, or Val). In Aspergillus terreus (strain NIH 2624 / FGSC A1156), this protein is Methionine aminopeptidase 2-1.